Reading from the N-terminus, the 370-residue chain is UDP-N-acetylglucosamine--N-acetylmuramyl-(pentapeptide) pyrophosphoryl-undecaprenol N-acetylglucosamine transferase (370 aa).

Residues 15–17, Asn129, Arg170, Ser200, Ile253, and Gln298 contribute to the UDP-N-acetyl-alpha-D-glucosamine site; that span reads TGG.

Belongs to the glycosyltransferase 28 family. MurG subfamily.

Its subcellular location is the cell inner membrane. It carries out the reaction di-trans,octa-cis-undecaprenyl diphospho-N-acetyl-alpha-D-muramoyl-L-alanyl-D-glutamyl-meso-2,6-diaminopimeloyl-D-alanyl-D-alanine + UDP-N-acetyl-alpha-D-glucosamine = di-trans,octa-cis-undecaprenyl diphospho-[N-acetyl-alpha-D-glucosaminyl-(1-&gt;4)]-N-acetyl-alpha-D-muramoyl-L-alanyl-D-glutamyl-meso-2,6-diaminopimeloyl-D-alanyl-D-alanine + UDP + H(+). It functions in the pathway cell wall biogenesis; peptidoglycan biosynthesis. Its function is as follows. Cell wall formation. Catalyzes the transfer of a GlcNAc subunit on undecaprenyl-pyrophosphoryl-MurNAc-pentapeptide (lipid intermediate I) to form undecaprenyl-pyrophosphoryl-MurNAc-(pentapeptide)GlcNAc (lipid intermediate II). The chain is UDP-N-acetylglucosamine--N-acetylmuramyl-(pentapeptide) pyrophosphoryl-undecaprenol N-acetylglucosamine transferase from Salinibacter ruber (strain DSM 13855 / M31).